Reading from the N-terminus, the 183-residue chain is Dual-action ribosomal maturation protein DarP (183 aa).

It belongs to the DarP family.

The protein localises to the cytoplasm. Member of a network of 50S ribosomal subunit biogenesis factors which assembles along the 30S-50S interface, preventing incorrect 23S rRNA structures from forming. Promotes peptidyl transferase center (PTC) maturation. The sequence is that of Dual-action ribosomal maturation protein DarP from Shigella flexneri serotype 5b (strain 8401).